We begin with the raw amino-acid sequence, 145 residues long: uncharacterized protein (145 aa).

Positions 1–26 (MAILLPLKSILPWCCITFSFLLSSSG) are cleaved as a signal peptide.

This is an uncharacterized protein from Saccharomyces cerevisiae (strain ATCC 204508 / S288c) (Baker's yeast).